The following is a 232-amino-acid chain: Ribonuclease 3 (232 aa).

In terms of domain architecture, RNase III spans 2-135 (IKALEDDLSQ…FIGALYLDQG (134 aa)). Glu-48 is a binding site for Mg(2+). The active site involves Asp-52. 2 residues coordinate Mg(2+): Asp-121 and Glu-124. Glu-124 is an active-site residue. The 70-residue stretch at 161–230 (DHKSELQELL…ANQALQLLRR (70 aa)) folds into the DRBM domain.

It belongs to the ribonuclease III family. Homodimer. The cofactor is Mg(2+).

The protein resides in the cytoplasm. It carries out the reaction Endonucleolytic cleavage to 5'-phosphomonoester.. In terms of biological role, digests double-stranded RNA. Involved in the processing of primary rRNA transcript to yield the immediate precursors to the large and small rRNAs (23S and 16S). Processes some mRNAs, and tRNAs when they are encoded in the rRNA operon. Processes pre-crRNA and tracrRNA of type II CRISPR loci if present in the organism. The protein is Ribonuclease 3 of Pediococcus pentosaceus (strain ATCC 25745 / CCUG 21536 / LMG 10740 / 183-1w).